We begin with the raw amino-acid sequence, 408 residues long: Imidazolonepropionase (408 aa).

Fe(3+) contacts are provided by His-73 and His-75. The Zn(2+) site is built by His-73 and His-75. 4-imidazolone-5-propanoate contacts are provided by Arg-82, Tyr-145, and His-178. Tyr-145 is an N-formimidoyl-L-glutamate binding site. Residue His-243 participates in Fe(3+) binding. A Zn(2+)-binding site is contributed by His-243. Gln-246 serves as a coordination point for 4-imidazolone-5-propanoate. Asp-318 is a Fe(3+) binding site. Zn(2+) is bound at residue Asp-318. N-formimidoyl-L-glutamate-binding residues include Asn-320 and Gly-322. Ser-323 contributes to the 4-imidazolone-5-propanoate binding site.

Belongs to the metallo-dependent hydrolases superfamily. HutI family. The cofactor is Zn(2+). Requires Fe(3+) as cofactor.

It localises to the cytoplasm. The catalysed reaction is 4-imidazolone-5-propanoate + H2O = N-formimidoyl-L-glutamate. Its pathway is amino-acid degradation; L-histidine degradation into L-glutamate; N-formimidoyl-L-glutamate from L-histidine: step 3/3. In terms of biological role, catalyzes the hydrolytic cleavage of the carbon-nitrogen bond in imidazolone-5-propanoate to yield N-formimidoyl-L-glutamate. It is the third step in the universal histidine degradation pathway. The protein is Imidazolonepropionase of Shewanella sediminis (strain HAW-EB3).